The following is a 95-amino-acid chain: Large ribosomal subunit protein uL23 (95 aa).

The protein belongs to the universal ribosomal protein uL23 family. In terms of assembly, part of the 50S ribosomal subunit. Contacts protein L29, and trigger factor when it is bound to the ribosome.

One of the early assembly proteins it binds 23S rRNA. One of the proteins that surrounds the polypeptide exit tunnel on the outside of the ribosome. Forms the main docking site for trigger factor binding to the ribosome. This is Large ribosomal subunit protein uL23 from Lawsonia intracellularis (strain PHE/MN1-00).